We begin with the raw amino-acid sequence, 363 residues long: Carbamoyl phosphate synthase small chain (363 aa).

Residues 1 to 172 are CPSase; it reads MKAFLVLDNG…TKYIFGTHTG (172 aa). The L-glutamine site is built by serine 45, glycine 224, and glycine 226. Residues 176-362 form the Glutamine amidotransferase type-1 domain; the sequence is KLAVYDYGVK…YDLVETTKRG (187 aa). Residue cysteine 252 is the Nucleophile of the active site. The L-glutamine site is built by leucine 253, glutamine 256, asparagine 294, glycine 296, and phenylalanine 297. Catalysis depends on residues histidine 335 and glutamate 337.

It belongs to the CarA family. As to quaternary structure, composed of two chains; the small (or glutamine) chain promotes the hydrolysis of glutamine to ammonia, which is used by the large (or ammonia) chain to synthesize carbamoyl phosphate. Tetramer of heterodimers (alpha,beta)4.

It catalyses the reaction hydrogencarbonate + L-glutamine + 2 ATP + H2O = carbamoyl phosphate + L-glutamate + 2 ADP + phosphate + 2 H(+). It carries out the reaction L-glutamine + H2O = L-glutamate + NH4(+). Its pathway is amino-acid biosynthesis; L-arginine biosynthesis; carbamoyl phosphate from bicarbonate: step 1/1. It participates in pyrimidine metabolism; UMP biosynthesis via de novo pathway; (S)-dihydroorotate from bicarbonate: step 1/3. Its function is as follows. Small subunit of the glutamine-dependent carbamoyl phosphate synthetase (CPSase). CPSase catalyzes the formation of carbamoyl phosphate from the ammonia moiety of glutamine, carbonate, and phosphate donated by ATP, constituting the first step of 2 biosynthetic pathways, one leading to arginine and/or urea and the other to pyrimidine nucleotides. The small subunit (glutamine amidotransferase) binds and cleaves glutamine to supply the large subunit with the substrate ammonia. This chain is Carbamoyl phosphate synthase small chain, found in Leptospira borgpetersenii serovar Hardjo-bovis (strain L550).